A 149-amino-acid polypeptide reads, in one-letter code: Putative glycine cleavage system H protein 3 (149 aa).

A Lipoyl-binding domain is found at threonine 39–glutamate 121. N6-lipoyllysine is present on lysine 80.

This sequence belongs to the GcvH family. In terms of assembly, the glycine cleavage system is composed of four proteins: P, T, L and H. (R)-lipoate is required as a cofactor.

In terms of biological role, the glycine cleavage system catalyzes the degradation of glycine. The H protein shuttles the methylamine group of glycine from the P protein to the T protein. The protein is Putative glycine cleavage system H protein 3 (gcvH3) of Dictyostelium discoideum (Social amoeba).